A 416-amino-acid chain; its full sequence is MSERRVAMDLPSGSNASMPLQRHRVSSLRGTRSPSSLDSPPASRTSAVGSLVRAPGVYVGVAPSGGIGGLGARVTRRALGISSVFLQGLRSSGLATAPAPGPERNHATAEDLGGCLVEYMTKVHALEQVSQELETQLRAHLESKAKRSGGWDALRASWASSYQQVGEAVLENARLMLQMETIQAGADDFKERYENEQPFRKAAEEEVSSLYKVIDEANLTKTDLEHQIESLKEELGSLSRSYEEDVKVLYKQLAGSELEQTDVPMGTGLDDVLETIRVQWERDVEKNRAEAGAVLQAKQQTEVVHVSQTQEEKLAAALSVELHDTSRQVQSLQAETESLRALKRGLENTLHDAKHWHDMELQNLGAVVGRLEAELAEIHSETEQQQQERAHLLACKGQLQKDVASYHALLDREESN.

The interval 1–48 (MSERRVAMDLPSGSNASMPLQRHRVSSLRGTRSPSSLDSPPASRTSAV) is disordered. Position 2 is an N-acetylserine (S2). The segment at 2–115 (SERRVAMDLP…HATAEDLGGC (114 aa)) is head. Phosphoserine is present on residues S27, S33, S36, and S91. Polar residues predominate over residues 28-48 (LRGTRSPSSLDSPPASRTSAV). Residues 105–416 (NHATAEDLGG…HALLDREESN (312 aa)) enclose the IF rod domain. 2 coiled-coil regions span residues 199–240 (FRKA…SLSR) and 314–391 (LAAA…ERAH). The tail stretch occupies residues 397–416 (GQLQKDVASYHALLDREESN).

It belongs to the intermediate filament family. In terms of assembly, part of a complex required for lens intermediate filament formation composed of BFSP1, BFSP2, and CRYAA. Found in a complex composed of PPL (via C-terminal linker domain), BFSP1 and BFSP2 in the retinal lens. Within the complex interacts with PPL (via C-terminal linker domain) and with BFSP1. Identified in a complex that contains VIM, EZR, AHNAK, BFSP1, BFSP2, ANK2, PLEC, PRX and spectrin. Interacts with LGSN. Interacts with VIM. Expressed in the deep and shallow cortices of the retina lens (at protein level).

It is found in the cell membrane. The protein localises to the cytoplasm. It localises to the cytoskeleton. The protein resides in the cell cortex. Required for the correct formation of lens intermediate filaments as part of a complex composed of BFSP1, BFSP2 and CRYAA. Plays a role in maintenance of retinal lens optical clarity. In Rattus norvegicus (Rat), this protein is Phakinin.